We begin with the raw amino-acid sequence, 532 residues long: Flavin-containing monooxygenase 1 (532 aa).

Over 1–510 the chain is Lumenal; sequence MVKRVAIVGA…TRTIQESPSS (510 aa). FAD contacts are provided by residues 9–13, Glu-32, 40–41, and 61–62; these read GAGVS, LW, and NS. Residues 60–61 and 195–198 each bind NADP(+); these read SN and SGTD. Residues 511–531 form a helical membrane-spanning segment; it reads FETLLKLFSFLALLIAVFLIF. A topological domain (cytoplasmic) is located at residue Leu-532.

This sequence belongs to the FMO family. FAD is required as a cofactor. Liver.

It localises to the endoplasmic reticulum membrane. The enzyme catalyses hypotaurine + NADPH + O2 + H(+) = taurine + NADP(+) + H2O. It carries out the reaction hypotaurine + NADH + O2 + H(+) = taurine + NAD(+) + H2O. It catalyses the reaction trimethylamine + NADPH + O2 = trimethylamine N-oxide + NADP(+) + H2O. The catalysed reaction is N,N-dimethylaniline + NADPH + O2 + H(+) = N,N-dimethylaniline N-oxide + NADP(+) + H2O. Functionally, broad spectrum monooxygenase that catalyzes the oxygenation of a wide variety of nitrogen- and sulfur-containing compounds including xenobiotics. Catalyzes the S-oxygenation of hypotaurine to produce taurine, an organic osmolyte involved in cell volume regulation as well as a variety of cytoprotective and developmental processes. In vitro, catalyzes the N-oxygenation of trimethylamine (TMA) to produce trimethylamine N-oxide (TMAO) and could therefore participate to the detoxification of this compound that is generated by the action of gut microbiota from dietary precursors such as choline, choline containing compounds, betaine or L-carnitine. This chain is Flavin-containing monooxygenase 1, found in Mus musculus (Mouse).